The chain runs to 101 residues: Small ribosomal subunit protein uS14 (101 aa).

The protein belongs to the universal ribosomal protein uS14 family. In terms of assembly, part of the 30S ribosomal subunit. Contacts proteins S3 and S10.

In terms of biological role, binds 16S rRNA, required for the assembly of 30S particles and may also be responsible for determining the conformation of the 16S rRNA at the A site. The sequence is that of Small ribosomal subunit protein uS14 from Serratia proteamaculans (strain 568).